The chain runs to 308 residues: Ectoine dioxygenase (308 aa).

Residue Gln-131 participates in L-ectoine binding. Lys-137 lines the 2-oxoglutarate pocket. Fe cation is bound by residues His-148, Asp-150, and His-249.

This sequence belongs to the PhyH family. EctD subfamily. In terms of assembly, homodimer. The cofactor is Fe(2+).

The catalysed reaction is L-ectoine + 2-oxoglutarate + O2 = 5-hydroxyectoine + succinate + CO2. In terms of biological role, involved in the biosynthesis of 5-hydroxyectoine, called compatible solute, which helps organisms to survive extreme osmotic stress by acting as a highly soluble organic osmolyte. Catalyzes the 2-oxoglutarate-dependent selective hydroxylation of L-ectoine to yield (4S,5S)-5-hydroxyectoine. This Bordetella parapertussis (strain 12822 / ATCC BAA-587 / NCTC 13253) protein is Ectoine dioxygenase.